We begin with the raw amino-acid sequence, 188 residues long: MAVGLFGGSFNPPHDGHALVAETALRRLGLDQLWWMVTPGNPLKDRNHLAPLGERIAMSEKIARNPRIKVTAFEQALGQSYTARTLEVIRARNRDVRFVWVMGADNLKNFHRWQDWRKIVATFPIAVVDRPGSTLAYLSSPMARAFSSARVDEDDAGTLAFRRAPAWTFIHGPRSGLSSTALRSAKSG.

The protein belongs to the NadD family.

The catalysed reaction is nicotinate beta-D-ribonucleotide + ATP + H(+) = deamido-NAD(+) + diphosphate. The protein operates within cofactor biosynthesis; NAD(+) biosynthesis; deamido-NAD(+) from nicotinate D-ribonucleotide: step 1/1. Its function is as follows. Catalyzes the reversible adenylation of nicotinate mononucleotide (NaMN) to nicotinic acid adenine dinucleotide (NaAD). This is Probable nicotinate-nucleotide adenylyltransferase from Rhizobium meliloti (strain 1021) (Ensifer meliloti).